Reading from the N-terminus, the 403-residue chain is S-adenosylmethionine synthase (403 aa).

Histidine 16 contacts ATP. Aspartate 18 is a binding site for Mg(2+). Position 44 (glutamate 44) interacts with K(+). L-methionine is bound by residues glutamate 57 and glutamine 100. Residues 100-110 (QSPDIAQGVDR) are flexible loop. The segment at 106-126 (QGVDRSYESRSGSASTDAHDL) is disordered. Residues 176-178 (DGK), 248-249 (KF), aspartate 257, 263-264 (RK), alanine 280, and lysine 284 each bind ATP. Aspartate 257 serves as a coordination point for L-methionine. Lysine 288 contacts L-methionine.

The protein belongs to the AdoMet synthase family. In terms of assembly, homotetramer; dimer of dimers. The cofactor is Mg(2+). K(+) is required as a cofactor.

It localises to the cytoplasm. The enzyme catalyses L-methionine + ATP + H2O = S-adenosyl-L-methionine + phosphate + diphosphate. The protein operates within amino-acid biosynthesis; S-adenosyl-L-methionine biosynthesis; S-adenosyl-L-methionine from L-methionine: step 1/1. In terms of biological role, catalyzes the formation of S-adenosylmethionine (AdoMet) from methionine and ATP. The overall synthetic reaction is composed of two sequential steps, AdoMet formation and the subsequent tripolyphosphate hydrolysis which occurs prior to release of AdoMet from the enzyme. The polypeptide is S-adenosylmethionine synthase (Clavibacter sepedonicus (Clavibacter michiganensis subsp. sepedonicus)).